The primary structure comprises 183 residues: Ribosome-recycling factor (183 aa).

This sequence belongs to the RRF family.

It is found in the cytoplasm. In terms of biological role, responsible for the release of ribosomes from messenger RNA at the termination of protein biosynthesis. May increase the efficiency of translation by recycling ribosomes from one round of translation to another. The chain is Ribosome-recycling factor from Clostridium tetani (strain Massachusetts / E88).